The sequence spans 902 residues: Probable leucine--tRNA ligase, mitochondrial (902 aa).

Residue Lys-67 is modified to N6-acetyllysine. The 'HIGH' region motif lies at 91–101 (YPSGKLHMGHV). The residue at position 235 (Lys-235) is an N6-acetyllysine. A 'KMSKS' region motif is present at residues 638–642 (KMSKS). Lys-641 provides a ligand contact to ATP.

The protein belongs to the class-I aminoacyl-tRNA synthetase family.

Its subcellular location is the mitochondrion matrix. It carries out the reaction tRNA(Leu) + L-leucine + ATP = L-leucyl-tRNA(Leu) + AMP + diphosphate. This chain is Probable leucine--tRNA ligase, mitochondrial (Lars2), found in Mus musculus (Mouse).